Consider the following 150-residue polypeptide: FAD synthase (150 aa).

Residues 8-9 (AF), 13-16 (HPGH), Asp-95, and His-122 contribute to the ATP site.

The protein belongs to the archaeal FAD synthase family. Homodimer. Requires a divalent metal cation as cofactor.

It catalyses the reaction FMN + ATP + H(+) = FAD + diphosphate. The protein operates within cofactor biosynthesis; FAD biosynthesis; FAD from FMN: step 1/1. Functionally, catalyzes the transfer of the AMP portion of ATP to flavin mononucleotide (FMN) to produce flavin adenine dinucleotide (FAD) coenzyme. This is FAD synthase from Methanobrevibacter ruminantium (strain ATCC 35063 / DSM 1093 / JCM 13430 / OCM 146 / M1) (Methanobacterium ruminantium).